We begin with the raw amino-acid sequence, 96 residues long: Frd operon uncharacterized protein C (96 aa).

This sequence belongs to the HupF/HypC family.

The chain is Frd operon uncharacterized protein C from Proteus vulgaris.